Consider the following 104-residue polypeptide: uncharacterized protein (104 aa).

Helical transmembrane passes span 26-46 and 70-90; these read IGTG…FTFF and GLLG…IIAI.

Its subcellular location is the membrane. This is an uncharacterized protein from Acanthamoeba polyphaga mimivirus (APMV).